The following is a 348-amino-acid chain: Protein pelota homolog (348 aa).

It belongs to the eukaryotic release factor 1 family. Pelota subfamily. In terms of assembly, monomer. Requires a divalent metal cation as cofactor.

It is found in the cytoplasm. May function in recognizing stalled ribosomes, interact with stem-loop structures in stalled mRNA molecules, and effect endonucleolytic cleavage of the mRNA. May play a role in the release non-functional ribosomes and degradation of damaged mRNAs. Has endoribonuclease activity. This is Protein pelota homolog from Methanococcus maripaludis (strain C7 / ATCC BAA-1331).